A 245-amino-acid polypeptide reads, in one-letter code: Ribosomal RNA small subunit methyltransferase G (245 aa).

S-adenosyl-L-methionine-binding positions include glycine 79, phenylalanine 84, alanine 130–glutamate 131, and arginine 150.

The protein belongs to the methyltransferase superfamily. RNA methyltransferase RsmG family.

Its subcellular location is the cytoplasm. Functionally, specifically methylates the N7 position of a guanine in 16S rRNA. The sequence is that of Ribosomal RNA small subunit methyltransferase G from Limosilactobacillus fermentum (strain NBRC 3956 / LMG 18251) (Lactobacillus fermentum).